Reading from the N-terminus, the 155-residue chain is uncharacterized protein (155 aa).

In terms of domain architecture, SCP spans 37–140; sequence IAELRKKLNL…GGYRLKTTDN (104 aa).

This is an uncharacterized protein from Borreliella burgdorferi (strain ATCC 35210 / DSM 4680 / CIP 102532 / B31) (Borrelia burgdorferi).